A 314-amino-acid chain; its full sequence is Solute carrier family 25 member 44 (314 aa).

Solcar repeat units lie at residues 18–100 (KKFY…TRKF), 107–210 (SNTV…YAEQ), and 220–302 (PHIV…LKKL). 6 helical membrane passes run 20–42 (FYVFGVAMTMMIRVSVYPFTLIR), 71–90 (AGLYRGFLVNTFTLISGQCY), 113–133 (LVAGGSASLVAQSITVPIDVV), 185–201 (GYVASLLTYIPNSAVWW), 222–239 (IVFQAISGPLAAATASIL), and 278–296 (LSARIISATPSTIVIVVGY).

Belongs to the mitochondrial carrier (TC 2.A.29) family. Highly expressed in brown adipose tissues compared with other metabolic organs.

Its subcellular location is the mitochondrion membrane. The catalysed reaction is L-valine(in) = L-valine(out). It carries out the reaction L-leucine(in) = L-leucine(out). In terms of biological role, mitochondrial solute transporter which transports branched-chain amino acid (BCAA; valine, leucine and isoleucine) into mitochondria in brown adipose tissue (BAT). BAT is involved in BCAA catabolism and actively utilizes BCAA in the mitochondria for thermogenesis. The chain is Solute carrier family 25 member 44 from Mus musculus (Mouse).